The primary structure comprises 108 residues: Abscisic stress-ripening protein 3 (108 aa).

2 disordered regions span residues 1–34 (MAEEKQHHRLFHHKNREEEGGPVDHKKKVKHHSH) and 84–108 (FAFHEHHQKKEAKKEKKAAEKGRHH). Residues 15–24 (NREEEGGPVD) are compositionally biased toward basic and acidic residues. Residues 25 to 34 (HKKKVKHHSH) show a composition bias toward basic residues. Residues 95 to 108 (AKKEKKAAEKGRHH) are compositionally biased toward basic and acidic residues.

Belongs to the abscisic acid and water stress-induced protein family.

The chain is Abscisic stress-ripening protein 3 from Solanum lycopersicum (Tomato).